The primary structure comprises 86 residues: Acyl carrier protein (86 aa).

The Carrier domain occupies 7–85 (SKVDNIEQKV…DVVNYIKEHK (79 aa)). An O-(pantetheine 4'-phosphoryl)serine modification is found at Ser-45.

It belongs to the acyl carrier protein (ACP) family. 4'-phosphopantetheine is transferred from CoA to a specific serine of apo-ACP by AcpS. This modification is essential for activity because fatty acids are bound in thioester linkage to the sulfhydryl of the prosthetic group.

The protein localises to the cytoplasm. It participates in lipid metabolism; fatty acid biosynthesis. In terms of biological role, carrier of the growing fatty acid chain in fatty acid biosynthesis. This Rickettsia bellii (strain RML369-C) protein is Acyl carrier protein.